The following is a 178-amino-acid chain: Inner membrane-spanning protein YciB (178 aa).

A run of 5 helical transmembrane segments spans residues isoleucine 22–leucine 42, methionine 50–asparagine 70, tryptophan 76–methionine 96, isoleucine 121–leucine 141, and phenylalanine 149–isoleucine 169.

This sequence belongs to the YciB family.

It is found in the cell inner membrane. In terms of biological role, plays a role in cell envelope biogenesis, maintenance of cell envelope integrity and membrane homeostasis. In Erwinia tasmaniensis (strain DSM 17950 / CFBP 7177 / CIP 109463 / NCPPB 4357 / Et1/99), this protein is Inner membrane-spanning protein YciB.